The sequence spans 97 residues: Co-chaperonin GroES (97 aa).

The protein belongs to the GroES chaperonin family. As to quaternary structure, heptamer of 7 subunits arranged in a ring. Interacts with the chaperonin GroEL.

The protein localises to the cytoplasm. In terms of biological role, together with the chaperonin GroEL, plays an essential role in assisting protein folding. The GroEL-GroES system forms a nano-cage that allows encapsulation of the non-native substrate proteins and provides a physical environment optimized to promote and accelerate protein folding. GroES binds to the apical surface of the GroEL ring, thereby capping the opening of the GroEL channel. In Buchnera aphidicola subsp. Tuberolachnus salignus, this protein is Co-chaperonin GroES.